A 330-amino-acid chain; its full sequence is 4-hydroxythreonine-4-phosphate dehydrogenase (330 aa).

Threonine 133 contacts substrate. Positions 161, 206, and 261 each coordinate a divalent metal cation. Lysine 269, asparagine 278, and arginine 287 together coordinate substrate.

It belongs to the PdxA family. In terms of assembly, homodimer. Requires Zn(2+) as cofactor. Mg(2+) serves as cofactor. Co(2+) is required as a cofactor.

The protein localises to the cytoplasm. The catalysed reaction is 4-(phosphooxy)-L-threonine + NAD(+) = 3-amino-2-oxopropyl phosphate + CO2 + NADH. It functions in the pathway cofactor biosynthesis; pyridoxine 5'-phosphate biosynthesis; pyridoxine 5'-phosphate from D-erythrose 4-phosphate: step 4/5. Functionally, catalyzes the NAD(P)-dependent oxidation of 4-(phosphooxy)-L-threonine (HTP) into 2-amino-3-oxo-4-(phosphooxy)butyric acid which spontaneously decarboxylates to form 3-amino-2-oxopropyl phosphate (AHAP). The polypeptide is 4-hydroxythreonine-4-phosphate dehydrogenase (Xylella fastidiosa (strain Temecula1 / ATCC 700964)).